The following is a 149-amino-acid chain: Transcriptional repressor NrdR (149 aa).

Residues 3–34 (CPFCQSDDTKVLDTRLIDDGSQVRRRRECVSC) fold into a zinc finger. The region spanning 49-139 (PHLIKSDDSR…VYRQFQDIEA (91 aa)) is the ATP-cone domain.

Belongs to the NrdR family. Requires Zn(2+) as cofactor.

Its function is as follows. Negatively regulates transcription of bacterial ribonucleotide reductase nrd genes and operons by binding to NrdR-boxes. This is Transcriptional repressor NrdR from Ruthia magnifica subsp. Calyptogena magnifica.